We begin with the raw amino-acid sequence, 101 residues long: Small ribosomal subunit protein uS14 (101 aa).

Belongs to the universal ribosomal protein uS14 family. In terms of assembly, part of the 30S ribosomal subunit. Contacts proteins S3 and S10.

Its function is as follows. Binds 16S rRNA, required for the assembly of 30S particles and may also be responsible for determining the conformation of the 16S rRNA at the A site. In Vibrio vulnificus (strain CMCP6), this protein is Small ribosomal subunit protein uS14.